Reading from the N-terminus, the 447-residue chain is KICSTOR complex protein ITFG2 (447 aa).

One copy of the FG-GAP 1; atypical repeat lies at 19-48; that stretch reads FPHAICLGDVDNDTLNELVVGDTSGKVSVY. S104 carries the post-translational modification Phosphoserine. One copy of the FG-GAP 2; atypical repeat lies at 126–155; the sequence is NTKVMLISDIDGDGCRELVVGYTDRVVRAF. A Phosphoserine modification is found at S220.

Part of the KICSTOR complex composed of KPTN, ITFG2, KICS2 and SZT2. SZT2 probably serves as a link between the other three proteins in the KICSTOR complex and may mediate the direct interaction with the GATOR complex via GATOR1. The KICSTOR complex interacts directly with the GATOR1 complex and most probably indirectly with the GATOR2 complex in an amino acid-independent manner.

It localises to the lysosome membrane. As part of the KICSTOR complex functions in the amino acid-sensing branch of the TORC1 signaling pathway. Recruits, in an amino acid-independent manner, the GATOR1 complex to the lysosomal membranes and allows its interaction with GATOR2 and the RAG GTPases. Functions upstream of the RAG GTPases and is required to negatively regulate mTORC1 signaling in absence of amino acids. In absence of the KICSTOR complex mTORC1 is constitutively localized to the lysosome and activated. The KICSTOR complex is also probably involved in the regulation of mTORC1 by glucose. The polypeptide is KICSTOR complex protein ITFG2 (Homo sapiens (Human)).